An 874-amino-acid chain; its full sequence is Alanine--tRNA ligase (874 aa).

Zn(2+)-binding residues include H564, H568, C665, and H669.

Belongs to the class-II aminoacyl-tRNA synthetase family. Zn(2+) serves as cofactor.

Its subcellular location is the cytoplasm. The catalysed reaction is tRNA(Ala) + L-alanine + ATP = L-alanyl-tRNA(Ala) + AMP + diphosphate. Catalyzes the attachment of alanine to tRNA(Ala) in a two-step reaction: alanine is first activated by ATP to form Ala-AMP and then transferred to the acceptor end of tRNA(Ala). Also edits incorrectly charged Ser-tRNA(Ala) and Gly-tRNA(Ala) via its editing domain. This is Alanine--tRNA ligase from Cupriavidus necator (strain ATCC 17699 / DSM 428 / KCTC 22496 / NCIMB 10442 / H16 / Stanier 337) (Ralstonia eutropha).